The sequence spans 554 residues: CTP synthase (554 aa).

The tract at residues 1-270 is amidoligase domain; it reads MTKFVFVTGG…DGLICDKLRL (270 aa). S13 contributes to the CTP binding site. S13 is a UTP binding site. ATP contacts are provided by residues 14–19 and D71; that span reads SLGKGI. Mg(2+)-binding residues include D71 and E144. CTP-binding positions include 151-153, 191-196, and K227; these read DIE and KTKPTQ. Residues 191–196 and K227 each bind UTP; that span reads KTKPTQ. Positions 295–548 constitute a Glutamine amidotransferase type-1 domain; that stretch reads TVAMVGKYVD…IAAAKARHQA (254 aa). G357 provides a ligand contact to L-glutamine. The Nucleophile; for glutamine hydrolysis role is filled by C384. Residues 385-388, E408, and R474 contribute to the L-glutamine site; that span reads LGMQ. Residues H521 and E523 contribute to the active site.

Belongs to the CTP synthase family. Homotetramer.

It catalyses the reaction UTP + L-glutamine + ATP + H2O = CTP + L-glutamate + ADP + phosphate + 2 H(+). The catalysed reaction is L-glutamine + H2O = L-glutamate + NH4(+). It carries out the reaction UTP + NH4(+) + ATP = CTP + ADP + phosphate + 2 H(+). It participates in pyrimidine metabolism; CTP biosynthesis via de novo pathway; CTP from UDP: step 2/2. With respect to regulation, allosterically activated by GTP, when glutamine is the substrate; GTP has no effect on the reaction when ammonia is the substrate. The allosteric effector GTP functions by stabilizing the protein conformation that binds the tetrahedral intermediate(s) formed during glutamine hydrolysis. Inhibited by the product CTP, via allosteric rather than competitive inhibition. Catalyzes the ATP-dependent amination of UTP to CTP with either L-glutamine or ammonia as the source of nitrogen. Regulates intracellular CTP levels through interactions with the four ribonucleotide triphosphates. The polypeptide is CTP synthase (Verminephrobacter eiseniae (strain EF01-2)).